The primary structure comprises 590 residues: Aspartate--tRNA(Asp/Asn) ligase (590 aa).

Glu176 contacts L-aspartate. An aspartate region spans residues 200–203 (QLFK). L-aspartate contacts are provided by Arg222 and His451. ATP is bound at residue 222 to 224 (RDE). Glu485 is a binding site for ATP. An L-aspartate-binding site is contributed by Arg492. Residue 537-540 (GIDR) participates in ATP binding.

This sequence belongs to the class-II aminoacyl-tRNA synthetase family. Type 1 subfamily. As to quaternary structure, homodimer.

It is found in the cytoplasm. It carries out the reaction tRNA(Asx) + L-aspartate + ATP = L-aspartyl-tRNA(Asx) + AMP + diphosphate. In terms of biological role, aspartyl-tRNA synthetase with relaxed tRNA specificity since it is able to aspartylate not only its cognate tRNA(Asp) but also tRNA(Asn). Reaction proceeds in two steps: L-aspartate is first activated by ATP to form Asp-AMP and then transferred to the acceptor end of tRNA(Asp/Asn). The protein is Aspartate--tRNA(Asp/Asn) ligase of Ehrlichia chaffeensis (strain ATCC CRL-10679 / Arkansas).